Consider the following 194-residue polypeptide: NADH-quinone oxidoreductase subunit B (194 aa).

Residues 1 to 11 (MGMSQNNSTLV) are compositionally biased toward polar residues. Residues 1-22 (MGMSQNNSTLVAPQPKGIIDPA) form a disordered region. Residues Cys-72, Cys-73, Cys-138, and Cys-168 each coordinate [4Fe-4S] cluster.

It belongs to the complex I 20 kDa subunit family. As to quaternary structure, NDH-1 is composed of 14 different subunits. Subunits NuoB, C, D, E, F, and G constitute the peripheral sector of the complex. Requires [4Fe-4S] cluster as cofactor.

The protein resides in the cell inner membrane. It catalyses the reaction a quinone + NADH + 5 H(+)(in) = a quinol + NAD(+) + 4 H(+)(out). NDH-1 shuttles electrons from NADH, via FMN and iron-sulfur (Fe-S) centers, to quinones in the respiratory chain. The immediate electron acceptor for the enzyme in this species is believed to be ubiquinone. Couples the redox reaction to proton translocation (for every two electrons transferred, four hydrogen ions are translocated across the cytoplasmic membrane), and thus conserves the redox energy in a proton gradient. The protein is NADH-quinone oxidoreductase subunit B of Agrobacterium fabrum (strain C58 / ATCC 33970) (Agrobacterium tumefaciens (strain C58)).